A 278-amino-acid polypeptide reads, in one-letter code: Small ribosomal subunit protein uS5 (278 aa).

A disordered region spans residues 1–43 (MADAPAPAGGRGGFRGGFGGRGRGRGRGRGRGRGRGRGAKDGD). Gly residues predominate over residues 9-21 (GGRGGFRGGFGGR). Positions 22–37 (GRGRGRGRGRGRGRGR) are enriched in basic residues. Positions 88 to 151 (LKDEVLKIMP…ILAKLSVVPV (64 aa)) constitute an S5 DRBM domain.

The protein belongs to the universal ribosomal protein uS5 family.

Its function is as follows. Component of the ribosome, a large ribonucleoprotein complex responsible for the synthesis of proteins in the cell. The small ribosomal subunit (SSU) binds messenger RNAs (mRNAs) and translates the encoded message by selecting cognate aminoacyl-transfer RNA (tRNA) molecules. The large subunit (LSU) contains the ribosomal catalytic site termed the peptidyl transferase center (PTC), which catalyzes the formation of peptide bonds, thereby polymerizing the amino acids delivered by tRNAs into a polypeptide chain. The nascent polypeptides leave the ribosome through a tunnel in the LSU and interact with protein factors that function in enzymatic processing, targeting, and the membrane insertion of nascent chains at the exit of the ribosomal tunnel. Plays a role in the assembly and function of the 40S ribosomal subunit. Mutations in this protein affects the control of translational fidelity. Involved in nucleolar processing of pre-18S ribosomal RNA and ribosome assembly. This is Small ribosomal subunit protein uS5 (RPS2) from Urechis caupo (Innkeeper worm).